The primary structure comprises 845 residues: Krueppel homolog 1 (845 aa).

The disordered stretch occupies residues glutamine 141–glutamine 164. C2H2-type zinc fingers lie at residues phenylalanine 194–histidine 216, tyrosine 271–histidine 293, phenylalanine 299–histidine 321, tyrosine 327–histidine 349, histidine 355–histidine 377, tyrosine 383–histidine 407, tyrosine 413–histidine 435, and tyrosine 441–histidine 463. Disordered regions lie at residues aspartate 469–glutamine 610 and glycine 757–serine 845. Composition is skewed to low complexity over residues alanine 474–serine 491, serine 498–proline 508, and alanine 532–alanine 559. Over residues serine 582–histidine 591 the composition is skewed to polar residues. A compositionally biased stretch (low complexity) spans arginine 759–serine 775. Residues asparagine 796–serine 809 show a composition bias toward basic and acidic residues. Residues glycine 810–glycine 823 show a composition bias toward low complexity.

It belongs to the krueppel C2H2-type zinc-finger protein family.

In terms of biological role, plays a general role in the hierarchies of gene expression leading to metamorphosis. The chain is Krueppel homolog 1 (Kr-h1) from Drosophila melanogaster (Fruit fly).